The primary structure comprises 209 residues: Large ribosomal subunit protein uL3 (209 aa).

An N5-methylglutamine modification is found at glutamine 150.

It belongs to the universal ribosomal protein uL3 family. Part of the 50S ribosomal subunit. Forms a cluster with proteins L14 and L19. Methylated by PrmB.

In terms of biological role, one of the primary rRNA binding proteins, it binds directly near the 3'-end of the 23S rRNA, where it nucleates assembly of the 50S subunit. In Escherichia coli O139:H28 (strain E24377A / ETEC), this protein is Large ribosomal subunit protein uL3.